A 364-amino-acid polypeptide reads, in one-letter code: GDP-fucose transporter 1 (364 aa).

8 helical membrane-spanning segments follow: residues 34–56 (FVLR…ISMV), 76–98 (VTFY…ATCC), 111–130 (LKVA…MITF), 140–162 (VAFY…YLLL), 167–185 (SFYA…WLGV), 195–214 (SWTG…LNAI), 227–249 (IWRL…LLAL), and 264–286 (AHFW…VTGL). A disordered region spans residues 345–364 (MKKTQEEPHPRENEKSNMEV).

It belongs to the TPT transporter family. SLC35C subfamily.

The protein resides in the golgi apparatus membrane. The enzyme catalyses GMP(out) + GDP-beta-L-fucose(in) = GMP(in) + GDP-beta-L-fucose(out). In terms of biological role, antiporter specific for GDP-l-fucose and depending on the concomitant reverse transport of GMP. Involved in GDP-fucose import from the cytoplasm into the Golgi lumen. This Bos taurus (Bovine) protein is GDP-fucose transporter 1 (SLC35C1).